Here is a 321-residue protein sequence, read N- to C-terminus: MYLYTLILLFLASANVNAYANPGACSGNCWTHDPGLYQRKSDGKYFRFATGGGIHIASADSLEGPWTDDGYVLPSGSIIDLDGKTNLWAPDLHYHDGTYYLYYAVSSLGSQNSATGVATSKTMEAGSWTDHGTTGIESTPSSPYNTIDANWIAVGGTQYVNFGSYWNNLFQVEMENGLKVKSGATPHQIAYNASGIHRQEAAFMFERNNYFYLTFSGGIALGYNDTWPAPGEEYFIAVCRSTSATGGFVDKNGVSCLNSGGSLLLSSHDFVYGPGGQGILQDSSKGFVLYYHYADTRIGKAVEDYQFGWNQLKWENDWPSV.

The N-terminal stretch at 1–18 is a signal peptide; it reads MYLYTLILLFLASANVNA. The Proton acceptor role is filled by Asp33. Asn192 carries N-linked (GlcNAc...) asparagine glycosylation. The Proton donor role is filled by Glu200. Asn224 carries N-linked (GlcNAc...) asparagine glycosylation.

This sequence belongs to the glycosyl hydrolase 43 family.

The protein localises to the secreted. It carries out the reaction Endohydrolysis of (1-&gt;5)-alpha-arabinofuranosidic linkages in (1-&gt;5)-arabinans.. Its pathway is glycan metabolism; L-arabinan degradation. Functionally, endo-1,5-alpha-L-arabinanase involved in degradation of pectin. Its preferred substrate is linear 1,5-alpha-L-arabinan. This Aspergillus fumigatus (strain ATCC MYA-4609 / CBS 101355 / FGSC A1100 / Af293) (Neosartorya fumigata) protein is Probable arabinan endo-1,5-alpha-L-arabinosidase C (abnC).